A 621-amino-acid chain; its full sequence is UvrABC system protein C (621 aa).

Positions 13–92 (EKPGVYMMRN…IKENRPKYNV (80 aa)) constitute a GIY-YIG domain. The UVR domain occupies 205 to 240 (DELVRKIEEKMKAAAISMDFENAARYRDQIIALNNI).

This sequence belongs to the UvrC family. Interacts with UvrB in an incision complex.

It localises to the cytoplasm. In terms of biological role, the UvrABC repair system catalyzes the recognition and processing of DNA lesions. UvrC both incises the 5' and 3' sides of the lesion. The N-terminal half is responsible for the 3' incision and the C-terminal half is responsible for the 5' incision. The polypeptide is UvrABC system protein C (Alkaliphilus oremlandii (strain OhILAs) (Clostridium oremlandii (strain OhILAs))).